A 531-amino-acid polypeptide reads, in one-letter code: Polyamine transporter PUT1 (531 aa).

The tract at residues 1 to 76 (MADTGGRPEV…LPDGDAGGPM (76 aa)) is disordered. Over residues 17-33 (SPGHPAASTTAAAAADL) the composition is skewed to low complexity. Basic and acidic residues predominate over residues 34 to 44 (GHADTGQEKPT). 12 consecutive transmembrane segments (helical) span residues 83 to 103 (VSMI…PFGI), 113 to 133 (LLAI…EALI), 147 to 167 (YVVW…GWMK), 193 to 213 (LGGG…LTLL), 224 to 244 (VAIC…LIAL), 262 to 284 (WNLY…TLAG), 296 to 316 (ALFY…LAGT), 341 to 361 (AWLM…MFVA), 391 to 411 (TPLA…MMSF), 414 to 434 (IVAA…VAFI), 453 to 473 (TAGC…VLAL), and 476 to 496 (LKVA…QPAL).

Belongs to the amino acid-polyamine-organocation (APC) superfamily. Polyamine:cation symporter (PHS) (TC 2.A.3.12) family. Expressed in seedling roots, leaves, stems, flowers and siliques.

Its subcellular location is the cell membrane. Cell membrane polyamine/proton symporter involved in the polyamine uptake in cells. Possesses high affinity for spermidine and lower affinity for spermine and putrescine. Transports paraquat, a polyamine analog, and thus confers sensitivity to this chemical which is used as a herbicide. In Oryza sativa subsp. japonica (Rice), this protein is Polyamine transporter PUT1 (PUT1).